Consider the following 61-residue polypeptide: Large ribosomal subunit protein bL32 (61 aa).

It belongs to the bacterial ribosomal protein bL32 family.

The sequence is that of Large ribosomal subunit protein bL32 from Cytophaga hutchinsonii (strain ATCC 33406 / DSM 1761 / CIP 103989 / NBRC 15051 / NCIMB 9469 / D465).